A 361-amino-acid polypeptide reads, in one-letter code: tRNA-specific 2-thiouridylase MnmA (361 aa).

ATP contacts are provided by residues 11-18 (GMSGGVDS) and M37. C106 serves as the catalytic Nucleophile. An intrachain disulfide couples C106 to C202. G130 contacts ATP. Residues 152–154 (KDQ) form an interaction with tRNA region. C202 acts as the Cysteine persulfide intermediate in catalysis. Residues 308-309 (RY) form an interaction with tRNA region.

It belongs to the MnmA/TRMU family.

It is found in the cytoplasm. It catalyses the reaction S-sulfanyl-L-cysteinyl-[protein] + uridine(34) in tRNA + AH2 + ATP = 2-thiouridine(34) in tRNA + L-cysteinyl-[protein] + A + AMP + diphosphate + H(+). Its function is as follows. Catalyzes the 2-thiolation of uridine at the wobble position (U34) of tRNA, leading to the formation of s(2)U34. The sequence is that of tRNA-specific 2-thiouridylase MnmA from Clostridium botulinum (strain Eklund 17B / Type B).